We begin with the raw amino-acid sequence, 661 residues long: Ubiquitin-associated and SH3 domain-containing protein A (661 aa).

Residues 15–60 (KLKSRSSPSLLEPLLAMGFPVHTALKALAATGRKTAEEALAWLHDH) enclose the UBA domain. Residues 276–341 (VHYQTLRALF…PENYTDRASE (66 aa)) form the SH3 domain. Positions 395–661 (RKSVLVVRHG…FNWRNWISGN (267 aa)) are phosphatase-like.

As to quaternary structure, homodimer or homooligomer. Interacts with CBL. Part of a complex containing CBL and activated EGFR. Interacts with ubiquitin and with mono-ubiquitinated proteins. Interacts with dynamin. As to expression, highest expression of UBASH3A in tissues belonging to the immune system, including spleen, peripheral blood leukocytes, thymus and bone marrow.

It localises to the cytoplasm. It is found in the nucleus. Interferes with CBL-mediated down-regulation and degradation of receptor-type tyrosine kinases. Promotes accumulation of activated target receptors, such as T-cell receptors, EGFR and PDGFRB, on the cell surface. Exhibits negligible protein tyrosine phosphatase activity at neutral pH. May act as a dominant-negative regulator of UBASH3B-dependent dephosphorylation. May inhibit dynamin-dependent endocytic pathways by functionally sequestering dynamin via its SH3 domain. The chain is Ubiquitin-associated and SH3 domain-containing protein A (UBASH3A) from Homo sapiens (Human).